The following is a 268-amino-acid chain: Peptide transport system ATP-binding protein SapF (268 aa).

Residues 6 to 251 form the ABC transporter domain; that stretch reads LEVRNLSKTF…PLHELTRRLI (246 aa). 47–54 provides a ligand contact to ATP; the sequence is GENGSGKS.

The protein belongs to the ABC transporter superfamily.

Its subcellular location is the cell inner membrane. Functionally, involved in a peptide intake transport system that plays a role in the resistance to antimicrobial peptides. The chain is Peptide transport system ATP-binding protein SapF from Salmonella typhimurium (strain LT2 / SGSC1412 / ATCC 700720).